Here is an 883-residue protein sequence, read N- to C-terminus: Valine--tRNA ligase (883 aa).

Positions 52 to 62 (PNVTGRLHLGH) match the 'HIGH' region motif. Residues 529–533 (KMSKS) carry the 'KMSKS' region motif. Lysine 532 contributes to the ATP binding site. The stretch at 813–848 (LEGLIDFDKEIKRLENELAKWTKEVERVQKKLSNQG) forms a coiled coil.

Belongs to the class-I aminoacyl-tRNA synthetase family. ValS type 1 subfamily. In terms of assembly, monomer.

The protein localises to the cytoplasm. The catalysed reaction is tRNA(Val) + L-valine + ATP = L-valyl-tRNA(Val) + AMP + diphosphate. In terms of biological role, catalyzes the attachment of valine to tRNA(Val). As ValRS can inadvertently accommodate and process structurally similar amino acids such as threonine, to avoid such errors, it has a 'posttransfer' editing activity that hydrolyzes mischarged Thr-tRNA(Val) in a tRNA-dependent manner. This chain is Valine--tRNA ligase, found in Oceanobacillus iheyensis (strain DSM 14371 / CIP 107618 / JCM 11309 / KCTC 3954 / HTE831).